The following is a 187-amino-acid chain: Elongation factor P (187 aa).

This sequence belongs to the elongation factor P family.

Its subcellular location is the cytoplasm. It participates in protein biosynthesis; polypeptide chain elongation. Its function is as follows. Involved in peptide bond synthesis. Stimulates efficient translation and peptide-bond synthesis on native or reconstituted 70S ribosomes in vitro. Probably functions indirectly by altering the affinity of the ribosome for aminoacyl-tRNA, thus increasing their reactivity as acceptors for peptidyl transferase. The polypeptide is Elongation factor P (efp) (Mycobacterium bovis (strain ATCC BAA-935 / AF2122/97)).